We begin with the raw amino-acid sequence, 212 residues long: Cytidylate kinase (212 aa).

7–15 (GPAASGKGT) contacts ATP.

This sequence belongs to the cytidylate kinase family. Type 1 subfamily.

Its subcellular location is the cytoplasm. The catalysed reaction is CMP + ATP = CDP + ADP. The enzyme catalyses dCMP + ATP = dCDP + ADP. This is Cytidylate kinase from Rhodopseudomonas palustris (strain BisB5).